Consider the following 152-residue polypeptide: uncharacterized protein (152 aa).

Over 1 to 5 (MWFPQ) the chain is Cytoplasmic. A helical membrane pass occupies residues 6 to 26 (IIAGMAAGGAASAMTPGKVLF). Over 27 to 38 (TNALGLGCSRSR) the chain is Extracellular. The chain crosses the membrane as a helical span at residues 39–59 (GLFLEMFGTAVLCLTVLMTAV). Residues 60-65 (EKRETN) are Cytoplasmic-facing. The helical transmembrane segment at 66-86 (FMAALPIGISLFMAHMALTGY) threads the bilayer. At 87–110 (TGTGVNPARSLGAAVAARYFPHYH) the chain is on the extracellular side. Residues 92 to 94 (NPA) carry the NPA motif. A helical transmembrane segment spans residues 111–131 (WIYWISPLLGAFLAWSVWQLL). Residues 132–152 (QILDYTTYVNAEKAAGQKKED) are Cytoplasmic-facing.

It belongs to the MIP/aquaporin (TC 1.A.8) family.

It localises to the membrane. This is an uncharacterized protein from Saccharomyces cerevisiae (strain RM11-1a) (Baker's yeast).